The following is a 136-amino-acid chain: Keratin-associated protein 15-1 (136 aa).

This sequence belongs to the PMG family. Interacts with hair keratins.

In terms of biological role, in the hair cortex, hair keratin intermediate filaments are embedded in an interfilamentous matrix, consisting of hair keratin-associated proteins (KRTAP), which are essential for the formation of a rigid and resistant hair shaft through their extensive disulfide bond cross-linking with abundant cysteine residues of hair keratins. The matrix proteins include the high-sulfur and high-glycine-tyrosine keratins. The protein is Keratin-associated protein 15-1 (KRTAP15-1) of Capra hircus (Goat).